The following is a 923-amino-acid chain: Helicase POLQ-like (923 aa).

Residues 1 to 84 (MNRTPIRRCK…STVTPIQQKI (84 aa)) form a disordered region. Over residues 43–55 (STSPQSPSSSTEN) the composition is skewed to low complexity. The Helicase ATP-binding domain occupies 178–349 (DKRLLDGENC…ALRAFVYSTN (172 aa)). 191-198 (LPTGAGKT) is an ATP binding site. The DEAH box motif lies at 295–298 (DELH). The Helicase C-terminal domain maps to 392–596 (GICQLLAKLI…CVVLKLAENI (205 aa)).

It belongs to the helicase family. SKI2 subfamily.

Its subcellular location is the nucleus. It is found in the chromosome. It catalyses the reaction Couples ATP hydrolysis with the unwinding of duplex DNA by translocating in the 3'-5' direction.. The catalysed reaction is ATP + H2O = ADP + phosphate + H(+). Single-stranded 3'-5' DNA helicase that plays a key role in homology-driven double-strand break (DSB) repair. Involved in different DSB repair mechanisms that are guided by annealing of extensive stretches of complementary bases at break ends, such as microhomology-mediated end-joining (MMEJ), single-strand annealing (SSA) or synthesis-dependent strand annealing (SDSA). The sequence is that of Helicase POLQ-like from Caenorhabditis elegans.